We begin with the raw amino-acid sequence, 360 residues long: Phospho-N-acetylmuramoyl-pentapeptide-transferase (360 aa).

10 helical membrane passes run 19 to 39 (LTYL…LSIF), 73 to 93 (TMGG…WADL), 95 to 115 (SVYT…GWTD), 136 to 156 (YLSL…DTPI), 173 to 193 (GILF…AVNL), 199 to 219 (GLAI…AYLS), 233 to 253 (IAGA…GLGF), 263 to 283 (VFMG…VAVV), 288 to 308 (LAFA…MIQV), and 338 to 358 (VTIR…STLK).

This sequence belongs to the glycosyltransferase 4 family. MraY subfamily. It depends on Mg(2+) as a cofactor.

It localises to the cell inner membrane. The catalysed reaction is UDP-N-acetyl-alpha-D-muramoyl-L-alanyl-gamma-D-glutamyl-meso-2,6-diaminopimeloyl-D-alanyl-D-alanine + di-trans,octa-cis-undecaprenyl phosphate = di-trans,octa-cis-undecaprenyl diphospho-N-acetyl-alpha-D-muramoyl-L-alanyl-D-glutamyl-meso-2,6-diaminopimeloyl-D-alanyl-D-alanine + UMP. It functions in the pathway cell wall biogenesis; peptidoglycan biosynthesis. Functionally, catalyzes the initial step of the lipid cycle reactions in the biosynthesis of the cell wall peptidoglycan: transfers peptidoglycan precursor phospho-MurNAc-pentapeptide from UDP-MurNAc-pentapeptide onto the lipid carrier undecaprenyl phosphate, yielding undecaprenyl-pyrophosphoryl-MurNAc-pentapeptide, known as lipid I. This Dichelobacter nodosus (strain VCS1703A) protein is Phospho-N-acetylmuramoyl-pentapeptide-transferase.